Here is a 333-residue protein sequence, read N- to C-terminus: Ornithine carbamoyltransferase (333 aa).

Carbamoyl phosphate is bound by residues 56–59 (STRT), Gln83, Arg107, and 134–137 (HPTQ). L-ornithine-binding positions include Asn167, Asp231, and 235–236 (SM). Carbamoyl phosphate contacts are provided by residues 273–274 (CL) and Arg318.

The protein belongs to the aspartate/ornithine carbamoyltransferase superfamily. OTCase family.

The protein resides in the cytoplasm. The catalysed reaction is carbamoyl phosphate + L-ornithine = L-citrulline + phosphate + H(+). Its pathway is amino-acid biosynthesis; L-arginine biosynthesis; L-arginine from L-ornithine and carbamoyl phosphate: step 1/3. Its function is as follows. Reversibly catalyzes the transfer of the carbamoyl group from carbamoyl phosphate (CP) to the N(epsilon) atom of ornithine (ORN) to produce L-citrulline. In Staphylococcus aureus (strain COL), this protein is Ornithine carbamoyltransferase (argF).